Reading from the N-terminus, the 557-residue chain is Glucose-6-phosphate isomerase (557 aa).

The active-site Proton donor is Glu361. Residues His392 and Lys520 contribute to the active site.

This sequence belongs to the GPI family.

It localises to the cytoplasm. The catalysed reaction is alpha-D-glucose 6-phosphate = beta-D-fructose 6-phosphate. It functions in the pathway carbohydrate biosynthesis; gluconeogenesis. Its pathway is carbohydrate degradation; glycolysis; D-glyceraldehyde 3-phosphate and glycerone phosphate from D-glucose: step 2/4. Its function is as follows. Catalyzes the reversible isomerization of glucose-6-phosphate to fructose-6-phosphate. This is Glucose-6-phosphate isomerase from Acinetobacter baylyi (strain ATCC 33305 / BD413 / ADP1).